Reading from the N-terminus, the 72-residue chain is Large ribosomal subunit protein uL29 (72 aa).

This sequence belongs to the universal ribosomal protein uL29 family.

The chain is Large ribosomal subunit protein uL29 from Thermus thermophilus (strain ATCC BAA-163 / DSM 7039 / HB27).